A 114-amino-acid chain; its full sequence is UPF0145 protein SSO1976 (114 aa).

The protein belongs to the UPF0145 family.

This is UPF0145 protein SSO1976 from Saccharolobus solfataricus (strain ATCC 35092 / DSM 1617 / JCM 11322 / P2) (Sulfolobus solfataricus).